Reading from the N-terminus, the 821-residue chain is TORTIFOLIA1-like protein 1 (821 aa).

5 HEAT repeats span residues 69–110, 114–151, 163–201, 205–242, and 245–282; these read PDSP…SYTD, SQLA…QFLK, SSLV…SATE, AAFQ…VGAI, and QSLE…HSSS. The residue at position 406 (Ser406) is a Phosphoserine. Disordered regions lie at residues 416–437 and 553–610; these read PSRQ…NTSV and MSIQ…RAWD. The stretch at 501–554 forms a coiled coil; it reads PPLQRQLLHLERQQTHIMNMLQDFMGGSHDGMISLENRVRGLERIVEEMSREMS. Polar residues predominate over residues 579 to 590; it reads YGPSSRNTQTST.

In terms of tissue distribution, expressed at low levels in roots, hypocotyls, stems, flowers, siliques, cotyledons, and leaves. Particularly present in hydathodes of cotyledons and root hairs.

It localises to the cytoplasm. It is found in the cytoskeleton. Plant-specific microtubule-associated protein (MAP) that regulates the orientation of cortical microtubules and the direction of organ growth. The polypeptide is TORTIFOLIA1-like protein 1 (Arabidopsis thaliana (Mouse-ear cress)).